The following is a 368-amino-acid chain: MTVTGIIAEFNPFHNGHKYLLETAEGLKIIAMSGNFMQRGEPALIDKWIRSEMALKNGADIVVELPFFVSVQSADYFAQGAIDILCQLGIQQLAFGTEDVIDYQKLIKVYEKKSKQMTAYLSTLEDTLSYPQKTQKMWEIFAGVKFSGQTPNHILGLSYAKASAGKHIQLCPIKRQGAAYHSKDKNHLLASASAIRQHLNDWDFISHSVPNAGLLINNPHMSWDHYFSFLKYQILNHSDLTSIFQVNDELASRIKKAIKVSQNIDHLVDTVATKRYTKARVRRILTYILVNAKEPTLPKGIHILGFTSKGQAHLKKLKKSRPLITRIGAETWDEMTQKADSIYQLGHQDIPEQSFGRIPIIIKNERLN.

Residues 7-20 (IAEF…HKYL), G96, N152, and R175 contribute to the ATP site.

This sequence belongs to the TmcAL family.

It localises to the cytoplasm. The enzyme catalyses cytidine(34) in elongator tRNA(Met) + acetate + ATP = N(4)-acetylcytidine(34) in elongator tRNA(Met) + AMP + diphosphate. Catalyzes the formation of N(4)-acetylcytidine (ac(4)C) at the wobble position of elongator tRNA(Met), using acetate and ATP as substrates. First activates an acetate ion to form acetyladenylate (Ac-AMP) and then transfers the acetyl group to tRNA to form ac(4)C34. In Streptococcus pyogenes serotype M28 (strain MGAS6180), this protein is tRNA(Met) cytidine acetate ligase.